The following is a 3008-amino-acid chain: Genome polyprotein (3008 aa).

Ser-2 bears the N-acetylserine; by host mark. An interaction with STAT1 region spans residues 2-23; it reads STNPKPQRKTKRNTNRRPMDVK. The interaction with EIF2AK2/PKR stretch occupies residues 2–58; it reads STNPKPQRKTKRNTNRRPMDVKFPGGGQIVGGVYLLPRRGPRLGVRATRKTSERSQP. Residues 2–59 are interaction with DDX3X; sequence STNPKPQRKTKRNTNRRPMDVKFPGGGQIVGGVYLLPRRGPRLGVRATRKTSERSQPR. Residues 2–75 form a disordered region; that stretch reads STNPKPQRKT…PKARRPEGRS (74 aa). At 2 to 168 the chain is on the cytoplasmic side; the sequence is STNPKPQRKT…EDGINYATGN (167 aa). 2 short sequence motifs (nuclear localization signal) span residues 5-13 and 38-43; these read PKPQRKTKR and PRRGPR. The segment covering 7–16 has biased composition (basic residues); that stretch reads PQRKTKRNTN. Positions 32–47 are enriched in low complexity; that stretch reads GGVYLLPRRGPRLGVR. Ser-53 carries the phosphoserine; by host modification. 2 short sequence motifs (nuclear localization signal) span residues 58-64 and 66-71; these read PRGRRQP and PKARRP. Residues 58-68 are compositionally biased toward basic residues; sequence PRGRRQPIPKA. Residues Ser-99 and Ser-116 each carry the phosphoserine; by host modification. Residues 112–152 form an important for endoplasmic reticulum and mitochondrial localization region; the sequence is PRGRSRNLGKVIDTLTCGFADLMGYIPLVGAPVGSVARALA. The segment at 122–173 is interaction with APOA2; sequence VIDTLTCGFADLMGYIPLVGAPVGSVARALAHGVRALEDGINYATGNLPGCS. The segment at 164-167 is important for lipid droplets localization; that stretch reads YATG. A helical transmembrane segment spans residues 169–189; the sequence is LPGCSFSIFLLALLSCLTVPA. Positions 178-191 are cleaved as a propeptide — ER anchor for the core protein, removed in mature form by host signal peptidase; that stretch reads LLALLSCLTVPASA. The Lumenal segment spans residues 190–358; that stretch reads SAVNYRNVSG…SGGHWGVLVG (169 aa). N-linked (GlcNAc...) asparagine; by host glycosylation is found at Asn-196, Asn-209, and Asn-234. An important for fusion region spans residues 265-296; that stretch reads MVGAATVCSGLYIGDLCGGLFLVGQMFSFRPR. An N-linked (GlcNAc...) asparagine; by host glycan is attached at Asn-305. The helical transmembrane segment at 359 to 379 threads the bilayer; that stretch reads VAYFSMQANWAKVILVLFLFA. At 380 to 725 the chain is on the lumenal side; the sequence is GVDAETHVSG…WEYVVLAFLL (346 aa). The interval 385-412 is HVR1; sequence THVSGAAVGRSTAGLANLFSSGSKQNLQ. Residues Asn-417, Asn-423, and Asn-430 are each glycosylated (N-linked (GlcNAc...) (high mannose) asparagine; by host). Intrachain disulfides connect Cys-429–Cys-553, Cys-452–Cys-459, Cys-487–Cys-495, and Cys-504–Cys-509. N-linked (GlcNAc...) asparagine; by host glycosylation is present at Asn-448. Positions 475–479 are HVR2; sequence ANISG. The N-linked (GlcNAc...) asparagine; by host glycan is linked to Asn-476. Residues 481-494 form a CD81-binding 1 region; that stretch reads SDDRPYCWHYAPRP. An N-linked (GlcNAc...) asparagine; by host glycan is attached at Asn-533. Positions 545–552 are CD81-binding 2; it reads PPHGAWFG. Residue Asn-557 is glycosylated (N-linked (GlcNAc...) asparagine; by host). 4 disulfides stabilise this stretch: Cys-565–Cys-570, Cys-581–Cys-585, Cys-597–Cys-620, and Cys-607–Cys-644. Residues Asn-623 and Asn-645 are each glycosylated (N-linked (GlcNAc...) (high mannose) asparagine; by host). Cys-652 and Cys-677 are disulfide-bonded. The interval 660–671 is PKR/eIF2-alpha phosphorylation homology domain (PePHD); sequence VELSPLLLTTTA. Residues 726 to 746 form a helical membrane-spanning segment; it reads LADARVSAYLWMMFMVSQVEA. The Lumenal segment spans residues 747-757; sequence ALSNLININAA. A helical transmembrane segment spans residues 758 to 778; the sequence is SAAGAQGFWYAILFICIVWHV. Over 779 to 782 the chain is Cytoplasmic; sequence KGRF. A helical membrane pass occupies residues 783–803; sequence PAAAAYAACGLWPCFLLLLML. Over 804 to 813 the chain is Lumenal; sequence PERAYAYDQE. Residues 814-834 traverse the membrane as a helical segment; the sequence is VAGSLGGAIVVMLTILTLSPH. Topologically, residues 835-881 are cytoplasmic; sequence YKLWLARGLWWIQYFIARTEAVLHVYIPSFNVRGPRDSVIVLAVLVC. A helical transmembrane segment spans residues 882 to 902; it reads PDLVFDITKYLLAILGPLHIL. The Lumenal segment spans residues 903-928; that stretch reads QASLLRIPYFVRAQALVKICSLLRGV. In terms of domain architecture, Peptidase C18 spans 903–1026; that stretch reads QASLLRIPYF…TETSKGWRLL (124 aa). The interval 904-1206 is protease NS2-3; the sequence is ASLLRIPYFV…PVESLETTMR (303 aa). Cys-922 carries S-palmitoyl cysteine; by host lipidation. Residues 929-949 form a helical membrane-spanning segment; sequence VYGKYFQMVVLKSRGLTGTYI. The segment at 929–949 is interaction with host SCPS1; that stretch reads VYGKYFQMVVLKSRGLTGTYI. Topologically, residues 950-1657 are cytoplasmic; it reads YDHLTPMSDW…CMSADLEVVT (708 aa). Active-site for protease NS2 activity; shared with dimeric partner residues include His-952, Glu-972, and Cys-993. The 182-residue stretch at 1027-1208 folds into the Peptidase S29 domain; it reads APITAYAQQT…ESLETTMRSP (182 aa). Residues His-1083 and Asp-1107 each act as charge relay system; for serine protease NS3 activity in the active site. Residues Cys-1123 and Cys-1125 each contribute to the Zn(2+) site. The active-site Charge relay system; for serine protease NS3 activity is the Ser-1165. 2 residues coordinate Zn(2+): Cys-1171 and His-1175. Residues 1217-1369 enclose the Helicase ATP-binding domain; the sequence is PAVPQTYQVA…SNIEEVALPT (153 aa). 1230–1237 contributes to the ATP binding site; the sequence is APTGSGKS. Mg(2+)-binding residues include Ser-1237 and Glu-1317. Residues 1316-1319 carry the DECH box motif; sequence DECY. Residues 1486-1498 are RNA-binding; it reads QRRGRTGRGRLGT. A helical membrane pass occupies residues 1658 to 1678; it reads STWVLVGGVLAALAAYCLSVG. The interval 1679 to 1690 is NS3-binding; sequence SVVIVGRVVLSG. The Cytoplasmic portion of the chain corresponds to 1679–1805; sequence SVVIVGRVVL…AVTSPLTTQQ (127 aa). The helical transmembrane segment at 1806-1826 threads the bilayer; the sequence is TLLFNILGGWVASQIRDSDAS. The Lumenal portion of the chain corresponds to 1827-1828; sequence TA. A helical membrane pass occupies residues 1829 to 1849; that stretch reads FVVSGLAGAAVGSVGLGKILV. Residue Asp-1850 is a topological domain, cytoplasmic. A helical transmembrane segment spans residues 1851–1871; it reads ILPGYGAGVRGAVVTFKIMSG. Residues 1872–1881 lie on the Lumenal side of the membrane; sequence EMPSTEDLVN. Residues 1882–1902 form a helical membrane-spanning segment; that stretch reads LLPAILSPGALVVEVVCPAIL. Over 1903–1972 the chain is Cytoplasmic; it reads RRHVGPGEGA…WINEDCSTPC (70 aa). The S-palmitoyl cysteine; by host moiety is linked to residue Cys-1972. Residues 1973 to 2002 lie within the membrane without spanning it; sequence AESWLWEVWDWVLHVLSDFKTCLKAKFVPL. The Cytoplasmic segment spans residues 2003 to 2987; the sequence is MPGIPLLSWP…YHSMSHARPR (985 aa). The Zn(2+) site is built by Cys-2029, Cys-2031, and Cys-2052. An FKBP8-binding region spans residues 2120–2208; sequence ELFTEVDGIR…ASSSASQLSP (89 aa). The segment at 2120-2329 is transcriptional activation; it reads ELFTEVDGIR…PVPSPRRKRT (210 aa). Positions 2135 to 2139 are interaction with non-structural protein 4A; the sequence is PKCKP. The tract at residues 2189–2435 is interaction with host SKP2; that stretch reads RLARGSRPSL…ALVTPCAAEE (247 aa). A phosphoserine; by host mark is found at Ser-2194, Ser-2197, Ser-2201, Ser-2204, and Ser-2207. Residues 2210-2245 are ISDR; the sequence is LLQATCTAPHDSPGTDLLEANLLWGSTATRVETDEK. The interval 2210–2272 is interaction with EIF2AK2/PKR; sequence LLQATCTAPH…REVSVAAEIL (63 aa). The interval 2245–2303 is NS4B-binding; it reads KVIILDSFESCVAEQNDDREVSVAAEILRPTKKFPPALPIWARPDYNPPLTETWKQQDY. The V3 stretch occupies residues 2296 to 2373; it reads ETWKQQDYQA…TPTETTDSGP (78 aa). The SH3-binding signature appears at 2319 to 2322; the sequence is PPVP. The Nuclear localization signal motif lies at 2324–2332; it reads PRRKRTVQL. Residues 2346 to 2406 form a disordered region; sequence AKTFGQSEPS…DPDLTSDSWS (61 aa). Residue Lys-2347 forms a Glycyl lysine isopeptide (Lys-Gly) (interchain with G-Cter in ubiquitin) linkage. The residue at position 2446 (Ser-2446) is a Phosphoserine; by host. The 119-residue stretch at 2631–2749 folds into the RdRp catalytic domain; it reads PMGFSYDTRC…IAESDGVEED (119 aa). Positions 2637, 2735, and 2736 each coordinate Mg(2+). Residues 2988–3008 form a helical membrane-spanning segment; sequence YLLLCLLILTVGVGIFLLPAR.

It belongs to the hepacivirus polyprotein family. Homooligomer. Interacts with E1 (via C-terminus). Interacts with the non-structural protein 5A. Interacts (via N-terminus) with host STAT1 (via SH2 domain); this interaction results in decreased STAT1 phosphorylation and ubiquitin-mediated proteasome-dependent STAT1 degradation, leading to decreased IFN-stimulated gene transcription. Interacts with host STAT3; this interaction constitutively activates STAT3. Interacts with host LTBR receptor. Interacts with host TNFRSF1A receptor and possibly induces apoptosis. Interacts with host HNRPK. Interacts with host YWHAE. Interacts with host UBE3A/E6AP. Interacts with host DDX3X. Interacts with host APOA2. Interacts with host RXRA protein. Interacts with host SP110 isoform 3/Sp110b; this interaction sequesters the transcriptional corepressor SP110 away from the nucleus. Interacts with host CREB3 nuclear transcription protein; this interaction triggers cell transformation. Interacts with host ACY3. Interacts with host C1QR1. Interacts with host RBM24; this interaction, which enhances the interaction of the mature core protein with 5'-UTR, may inhibit viral translation and favor replication. Interacts with host EIF2AK2/PKR; this interaction induces the autophosphorylation of EIF2AK2. Part of the viral assembly initiation complex composed of NS2, E1, E2, NS3, NS4A, NS5A and the mature core protein. As to quaternary structure, forms a heterodimer with envelope glycoprotein E2. Interacts with mature core protein. Interacts with protease NS2. The heterodimer E1/E2 interacts with host CLDN1; this interaction plays a role in viral entry into host cell. Interacts with host SPSB2 (via C-terminus). Part of the viral assembly initiation complex composed of NS2, E1, E2, NS3, NS4A, NS5A and the mature core protein. Interacts with host NEURL3; this interaction prevents E1 binding to glycoprotein E2. In terms of assembly, forms a heterodimer with envelope glycoprotein E1. Interacts with host CD81 and SCARB1 receptors; these interactions play a role in viral entry into host cell. Interacts with host EIF2AK2/PKR; this interaction inhibits EIF2AK2 and probably allows the virus to evade the innate immune response. Interacts with host CD209/DC-SIGN and CLEC4M/DC-SIGNR. Interact with host SPCS1; this interaction is essential for viral particle assembly. Interacts with protease NS2. The heterodimer E1/E2 interacts with host CLDN1; this interaction plays a role in viral entry into host cell. Part of the viral assembly initiation complex composed of NS2, E1, E2, NS3, NS4A, NS5A and the mature core protein. Interacts with host SLC3A2/4F2hc; the interaction may facilitate viral entry into host cell. Interacts with human PLSCR1. Homohexamer. Homoheptamer. Interacts with protease NS2. As to quaternary structure, homodimer. Interacts with host SPCS1; this interaction is essential for viral particle assembly. Interacts with envelope glycoprotein E1. Interacts with envelope glycoprotein E2. Interacts with viroporin p7. Interacts with serine protease/helicase NS3. Part of the replication complex composed of NS2, NS3, NS4A, NS4B, NS5A and the RNA-directed RNA polymerase embedded in an ER-derived membranous web. Part of the viral assembly initiation complex composed of NS2, E1, E2, NS3, NS4A, NS5A and the mature core protein. In terms of assembly, interacts with protease NS2. Interacts with non-structural protein 4A; this interaction stabilizes the folding of NS3 serine protease. NS3-NS4A interaction is essential for NS3 activation and allows membrane anchorage of the latter. NS3/NS4A complex also prevents phosphorylation of host IRF3, thus preventing the establishment of dsRNA induced antiviral state. Interacts with host MAVS; this interaction leads to the cleavage and inhibition of host MAVS. Interacts with host TICAM1; this interaction leads to the cleavage and inhibition of host TICAM1. Interacts with host TANK-binding kinase/TBK1; this interaction results in the inhibition of the association between TBK1 and IRF3, which leads to the inhibition of IRF3 activation. Interacts with host RBM24. Part of the replication complex composed of NS2, NS3, NS4A, NS4B, NS5A and the RNA-directed RNA polymerase embedded in an ER-derived membranous web. Part of the viral assembly initiation complex composed of NS2, E1, E2, NS3, NS4A, NS5A and the mature core protein. Interacts with NS3 serine protease; this interaction stabilizes the folding of NS3 serine protease. NS3-NS4A interaction is essential for NS3 activation and allows membrane anchorage of the latter. Interacts with non-structural protein 5A (via N-terminus). Part of the replication complex composed of NS2, NS3, NS4A, NS4B, NS5A and the RNA-directed RNA polymerase embedded in an ER-derived membranous web. Part of the viral assembly initiation complex composed of NS2, E1, E2, NS3, NS4A, NS5A and the mature core protein. As to quaternary structure, homomultimer. Interacts with non-structural protein NS5A. Interacts with host PLA2G4C; this interaction likely initiates the recruitment of replication complexes to lipid droplets. Interacts with host STING; this interaction disrupts the interaction between STING and TBK1 thereby suppressing the interferon signaling. Part of the replication complex composed of NS2, NS3, NS4A, NS4B, NS5A and the RNA-directed RNA polymerase embedded in an ER-derived membranous web. In terms of assembly, monomer. Homodimer; dimerization is required for RNA-binding. Interacts with the mature core protein. Interacts (via N-terminus) with non-structural protein 4A. Interacts with non-structural protein 4B. Interacts (via region D2) with RNA-directed RNA polymerase. Part of the viral assembly initiation complex composed of NS2, E1, E2, NS3, NS4A, NS5A and the mature core protein. Part of the replication complex composed of NS2, NS3, NS4A, NS4B, NS5A and the RNA-directed RNA polymerase embedded in an ER-derived membranous web. Interacts with host GRB2. Interacts with host BIN1. Interacts with host PIK3R1. Interacts with host SRCAP. Interacts with host FKBP8. Interacts (via C-terminus) with host VAPB (via MSP domain). Interacts with host EIF2AK2/PKR; this interaction leads to disruption of EIF2AK2 dimerization by NS5A and probably allows the virus to evade the innate immune response. Interacts (via N-terminus) with host PACSIN2 (via N-terminus); this interaction attenuates protein kinase C alpha-mediated phosphorylation of PACSIN2 by disrupting the interaction between PACSIN2 and PRKCA. Interacts (via N-terminus) with host SRC kinase (via SH2 domain). Interacts with most Src-family kinases. Interacts with host IFI27 and SKP2; promotes the ubiquitin-mediated proteasomal degradation of NS5A. Interacts with host GPS2. Interacts with host TNFRSF21; this interaction allows the modulation by the virus of JNK, p38 MAPK, STAT3, and Akt signaling pathways in a DR6-dependent manner. Interacts (via N-terminus) with host CIDEB (via N-terminus); this interaction seems to regulate the association of HCV particles with APOE. Interacts with host CHKA/Choline Kinase-alpha; CHKA bridges host PI4KA and NS5A and potentiates NS5A-stimulated PI4KA activity, which then facilitates the targeting of the ternary complex to the ER for viral replication. Interacts with host SPSB2 (via C-terminus); this interaction targets NS5A for ubiquitination and degradation. Interacts with host RAB18; this interaction may promote the association of NS5A and other replicase components with lipid droplets. Interacts (via region D2) with host PPIA/CYPA; the interaction stimulates RNA-binding ability of NS5A and is dependent on the peptidyl-prolyl cis-trans isomerase activity of PPIA/CYPA. Interacts with host TRIM14; this interaction induces the degradation of NS5A. Homooligomer. Interacts with non-structural protein 5A. Interacts with host VAPB. Interacts with host PRK2/PKN2. Interacts with host HNRNPA1 and SEPT6; these interactions facilitate viral replication. Part of the replication complex composed of NS2, NS3, NS4A, NS4B, NS5A and the RNA-directed RNA polymerase. The cofactor is Zn(2+). Requires Mg(2+) as cofactor. Specific enzymatic cleavages in vivo yield mature proteins. The structural proteins, core, E1, E2 and p7 are produced by proteolytic processing by host signal peptidases. The core protein precursor is synthesized as a 23 kDa, which is retained in the ER membrane through the hydrophobic signal peptide. Cleavage by the signal peptidase releases the 21 kDa mature core protein. The cleavage of the core protein precursor occurs between aminoacids 176 and 188 but the exact cleavage site is not known. Some degraded forms of the core protein appear as well during the course of infection. The other proteins (p7, NS2, NS3, NS4A, NS4B, NS5A and NS5B) are cleaved by the viral proteases. Autoprocessing between NS2 and NS3 is mediated by the NS2 cysteine protease catalytic domain and regulated by the NS3 N-terminal domain. Post-translationally, phosphorylated by host PKC and PKA. In terms of processing, ubiquitinated; mediated by UBE3A and leading to core protein subsequent proteasomal degradation. Highly N-glycosylated. Post-translationally, palmitoylation is required for NS2/3 autoprocessing and E2 recruitment to membranes. In terms of processing, palmitoylated. This modification may play a role in its polymerization or in protein-protein interactions. Phosphorylated on serines in a basal form termed p56. p58 is a hyperphosphorylated form of p56. p56 and p58 coexist in the cell in roughly equivalent amounts. Hyperphosphorylation is dependent on the presence of NS4A. Host CSNK1A1/CKI-alpha or RPS6KB1 kinases may be responsible for NS5A phosphorylation. Post-translationally, tyrosine phosphorylation is essential for the interaction with host SRC. In terms of processing, the N-terminus is phosphorylated by host PRK2/PKN2.

It is found in the host endoplasmic reticulum membrane. The protein localises to the host mitochondrion membrane. It localises to the virion. Its subcellular location is the host cytoplasm. The protein resides in the host nucleus. It is found in the host lipid droplet. The protein localises to the virion membrane. It localises to the host mitochondrion. Its subcellular location is the host cell membrane. The protein resides in the host perinuclear region. It catalyses the reaction Hydrolysis of four peptide bonds in the viral precursor polyprotein, commonly with Asp or Glu in the P6 position, Cys or Thr in P1 and Ser or Ala in P1'.. The enzyme catalyses a ribonucleoside 5'-triphosphate + H2O = a ribonucleoside 5'-diphosphate + phosphate + H(+). The catalysed reaction is ATP + H2O = ADP + phosphate + H(+). It carries out the reaction RNA(n) + a ribonucleoside 5'-triphosphate = RNA(n+1) + diphosphate. With respect to regulation, inhibited by the antiviral drug hexamethylene amiloride. Inhibition by amantadine appears to be genotype-dependent. Also inhibited by long-alkyl-chain iminosugar derivatives. Activity is up-regulated by PRK2/PKN2-mediated phosphorylation. Its function is as follows. Packages viral RNA to form a viral nucleocapsid, and promotes virion budding. Participates in the viral particle production as a result of its interaction with the non-structural protein 5A. Binds RNA and may function as a RNA chaperone to induce the RNA structural rearrangements taking place during virus replication. Modulates viral translation initiation by interacting with viral IRES and 40S ribosomal subunit. Affects various cell signaling pathways, host immunity and lipid metabolism. Prevents the establishment of cellular antiviral state by blocking the interferon-alpha/beta (IFN-alpha/beta) and IFN-gamma signaling pathways and by blocking the formation of phosphorylated STAT1 and promoting ubiquitin-mediated proteasome-dependent degradation of STAT1. Activates STAT3 leading to cellular transformation. Regulates the activity of cellular genes, including c-myc and c-fos. May repress the promoter of p53, and sequester CREB3 and SP110 isoform 3/Sp110b in the cytoplasm. Represses cell cycle negative regulating factor CDKN1A, thereby interrupting an important check point of normal cell cycle regulation. Targets transcription factors involved in the regulation of inflammatory responses and in the immune response: suppresses TNF-induced NF-kappa-B activation, and activates AP-1. Binds to dendritic cells (DCs) via C1QR1, resulting in down-regulation of T-lymphocytes proliferation. Alters lipid metabolism by interacting with hepatocellular proteins involved in lipid accumulation and storage. Induces up-regulation of FAS promoter activity, and thereby contributes to the increased triglyceride accumulation in hepatocytes (steatosis). Functionally, forms a heterodimer with envelope glycoprotein E2, which mediates virus attachment to the host cell, virion internalization through clathrin-dependent endocytosis and fusion with host membrane. Fusion with the host cell is most likely mediated by both E1 and E2, through conformational rearrangements of the heterodimer required for fusion rather than a classical class II fusion mechanism. E1/E2 heterodimer binds host apolipoproteins such as APOB and ApoE thereby forming a lipo-viro-particle (LVP). APOE associated to the LVP allows the initial virus attachment to cell surface receptors such as the heparan sulfate proteoglycans (HSPGs), syndecan-1 (SDC1), syndecan-1 (SDC2), the low-density lipoprotein receptor (LDLR) and scavenger receptor class B type I (SCARB1). The cholesterol transfer activity of SCARB1 allows E2 exposure and binding of E2 to SCARB1 and the tetraspanin CD81. E1/E2 heterodimer binding on CD81 activates the epithelial growth factor receptor (EGFR) signaling pathway. Diffusion of the complex E1-E2-EGFR-SCARB1-CD81 to the cell lateral membrane allows further interaction with Claudin 1 (CLDN1) and occludin (OCLN) to finally trigger HCV entry. Forms a heterodimer with envelope glycoprotein E1, which mediates virus attachment to the host cell, virion internalization through clathrin-dependent endocytosis and fusion with host membrane. Fusion with the host cell is most likely mediated by both E1 and E2, through conformational rearrangements of the heterodimer required for fusion rather than a classical class II fusion mechanism. The interaction between envelope glycoprotein E2 and host apolipoprotein E/APOE allows the proper assembly, maturation and infectivity of the viral particles. This interaction is probably promoted via the up-regulation of cellular autophagy by the virus. E1/E2 heterodimer binds host apolipoproteins such as APOB and APOE thereby forming a lipo-viro-particle (LVP). APOE associated to the LVP allows the initial virus attachment to cell surface receptors such as the heparan sulfate proteoglycans (HSPGs), syndecan-1 (SDC1), syndecan-1 (SDC2), the low-density lipoprotein receptor (LDLR) and scavenger receptor class B type I (SCARB1). The cholesterol transfer activity of SCARB1 allows E2 exposure and binding of E2 to SCARB1 and the tetraspanin CD81. E1/E2 heterodimer binding on CD81 activates the epithelial growth factor receptor (EGFR) signaling pathway. Diffusion of the complex E1-E2-EGFR-SCARB1-CD81 to the cell lateral membrane allows further interaction with Claudin 1 (CLDN1) and occludin (OCLN) to finally trigger HCV entry. Inhibits host EIF2AK2/PKR activation, preventing the establishment of an antiviral state. Viral ligand for CD209/DC-SIGN and CLEC4M/DC-SIGNR, which are respectively found on dendritic cells (DCs), and on liver sinusoidal endothelial cells and macrophage-like cells of lymph node sinuses. These interactions allow the capture of circulating HCV particles by these cells and subsequent facilitated transmission to permissive cells such as hepatocytes and lymphocyte subpopulations. The interaction between E2 and host amino acid transporter complex formed by SLC3A2 and SLC7A5/LAT1 may facilitate viral entry into host cell. In terms of biological role, ion channel protein that acts as a viroporin and plays an essential role in the assembly, envelopment and secretion of viral particles. Regulates the host cell secretory pathway, which induces the intracellular retention of viral glycoproteins and favors assembly of viral particles. Creates a pore in acidic organelles and releases Ca(2+) and H(+) in the cytoplasm of infected cells, leading to a productive viral infection. High levels of cytoplasmic Ca(2+) may trigger membrane trafficking and transport of viral ER-associated proteins to viroplasms, sites of viral genome replication. This ionic imbalance induces the assembly of the inflammasome complex, which triggers the maturation of pro-IL-1beta into IL-1beta through the action of caspase-1. Targets also host mitochondria and induces mitochondrial depolarization. In addition of its role as a viroporin, acts as a lipid raft adhesion factor. Its function is as follows. Cysteine protease required for the proteolytic auto-cleavage between the non-structural proteins NS2 and NS3. The N-terminus of NS3 is required for the function of NS2 protease (active region NS2-3). Promotes the initiation of viral particle assembly by mediating the interaction between structural and non-structural proteins. Functionally, displays three enzymatic activities: serine protease with a chymotrypsin-like fold, NTPase and RNA helicase. NS3 serine protease, in association with NS4A, is responsible for the cleavages of NS3-NS4A, NS4A-NS4B, NS4B-NS5A and NS5A-NS5B. The NS3/NS4A complex prevents phosphorylation of host IRF3, thus preventing the establishment of dsRNA induced antiviral state. The NS3/NS4A complex induces host amino acid transporter component SLC3A2, thus contributing to HCV propagation. NS3 RNA helicase binds to RNA and unwinds both dsDNA and dsRNA in the 3' to 5' direction, and likely resolves RNA complicated stable secondary structures in the template strand. Binds a single ATP and catalyzes the unzipping of a single base pair of dsRNA. Inhibits host antiviral proteins TBK1 and IRF3 thereby preventing the establishment of an antiviral state. Cleaves host MAVS/CARDIF thereby preventing the establishment of an antiviral state. Cleaves host TICAM1/TRIF, thereby disrupting TLR3 signaling and preventing the establishment of an antiviral state. Induces a specific membrane alteration that serves as a scaffold for the virus replication complex. This membrane alteration gives rise to the so-called ER-derived membranous web that contains the replication complex. NS4B self-interaction contributes to its function in membranous web formation. Promotes host TRIF protein degradation in a CASP8-dependent manner thereby inhibiting host TLR3-mediated interferon signaling. Disrupts the interaction between STING and TBK1 contributing to the inhibition of interferon signaling. In terms of biological role, phosphorylated protein that is indispensable for viral replication and assembly. Both hypo- and hyperphosphorylated states are required for the viral life cycle. The hyperphosphorylated form of NS5A is an inhibitor of viral replication. Involved in RNA-binding and especially in binding to the viral genome. Zinc is essential for RNA-binding. Participates in the viral particle production as a result of its interaction with the mature viral core protein. Its interaction with host VAPB may target the viral replication complex to vesicles. Down-regulates viral IRES translation initiation. Mediates interferon resistance, presumably by interacting with and inhibiting host EIF2AK2/PKR. Prevents BIN1-induced apoptosis. Acts as a transcriptional activator of some host genes important for viral replication when localized in the nucleus. Via the interaction with host PACSIN2, modulates lipid droplet formation in order to promote virion assembly. Modulates TNFRSF21/DR6 signaling pathway for viral propagation. Its function is as follows. RNA-dependent RNA polymerase that performs primer-template recognition and RNA synthesis during viral replication. Initiates RNA transcription/replication at a flavin adenine dinucleotide (FAD), resulting in a 5'- FAD cap on viral RNAs. In this way, recognition of viral 5' RNA by host pattern recognition receptors can be bypassed, thereby evading activation of antiviral pathways. The chain is Genome polyprotein from Homo sapiens (Human).